The following is a 193-amino-acid chain: Potassium-transporting ATPase KdpC subunit (193 aa).

The helical transmembrane segment at 14–34 (ITFTFLVLCGLVYPLIVTGIA) threads the bilayer.

It belongs to the KdpC family. The system is composed of three essential subunits: KdpA, KdpB and KdpC.

Its subcellular location is the cell membrane. Its function is as follows. Part of the high-affinity ATP-driven potassium transport (or Kdp) system, which catalyzes the hydrolysis of ATP coupled with the electrogenic transport of potassium into the cytoplasm. This subunit acts as a catalytic chaperone that increases the ATP-binding affinity of the ATP-hydrolyzing subunit KdpB by the formation of a transient KdpB/KdpC/ATP ternary complex. The protein is Potassium-transporting ATPase KdpC subunit of Bacillus cereus (strain ATCC 14579 / DSM 31 / CCUG 7414 / JCM 2152 / NBRC 15305 / NCIMB 9373 / NCTC 2599 / NRRL B-3711).